The primary structure comprises 323 residues: tRNA U34 carboxymethyltransferase (323 aa).

Residues lysine 91, tryptophan 105, lysine 110, glycine 130, aspartate 152 to threonine 154, isoleucine 181 to glutamate 182, methionine 196, tyrosine 200, and arginine 315 contribute to the carboxy-S-adenosyl-L-methionine site.

This sequence belongs to the class I-like SAM-binding methyltransferase superfamily. CmoB family. In terms of assembly, homotetramer.

It catalyses the reaction carboxy-S-adenosyl-L-methionine + 5-hydroxyuridine(34) in tRNA = 5-carboxymethoxyuridine(34) in tRNA + S-adenosyl-L-homocysteine + H(+). Functionally, catalyzes carboxymethyl transfer from carboxy-S-adenosyl-L-methionine (Cx-SAM) to 5-hydroxyuridine (ho5U) to form 5-carboxymethoxyuridine (cmo5U) at position 34 in tRNAs. This chain is tRNA U34 carboxymethyltransferase, found in Photorhabdus laumondii subsp. laumondii (strain DSM 15139 / CIP 105565 / TT01) (Photorhabdus luminescens subsp. laumondii).